The following is a 328-amino-acid chain: dITP/XTP pyrophosphatase (328 aa).

The tract at residues 1–129 (MSEKIYEYKD…ATSEQGFGDI (129 aa)) is unknown. An NTP pyrophosphatase region spans residues 130–324 (ILIATRNEGK…KLMEVFPAWQ (195 aa)). 134–139 (TRNEGK) is a substrate binding site. Asp196 functions as the Proton acceptor in the catalytic mechanism. Residue Asp196 participates in Mg(2+) binding. Residues Ser197, 280–283 (FGYD), Lys303, and 308–309 (HR) each bind substrate.

The protein belongs to the HAM1 NTPase family. As to quaternary structure, homodimer. Mg(2+) serves as cofactor.

The catalysed reaction is XTP + H2O = XMP + diphosphate + H(+). It catalyses the reaction dITP + H2O = dIMP + diphosphate + H(+). It carries out the reaction ITP + H2O = IMP + diphosphate + H(+). Functionally, pyrophosphatase that catalyzes the hydrolysis of nucleoside triphosphates to their monophosphate derivatives, with a high preference for the non-canonical purine nucleotides XTP (xanthosine triphosphate), dITP (deoxyinosine triphosphate) and ITP. Seems to function as a house-cleaning enzyme that removes non-canonical purine nucleotides from the nucleotide pool, thus preventing their incorporation into DNA/RNA and avoiding chromosomal lesions. The chain is dITP/XTP pyrophosphatase from Streptococcus pyogenes serotype M1.